We begin with the raw amino-acid sequence, 105 residues long: Small ribosomal subunit protein uS10 (105 aa).

The protein belongs to the universal ribosomal protein uS10 family. Part of the 30S ribosomal subunit.

In terms of biological role, involved in the binding of tRNA to the ribosomes. This is Small ribosomal subunit protein uS10 from Nitratidesulfovibrio vulgaris (strain DSM 19637 / Miyazaki F) (Desulfovibrio vulgaris).